We begin with the raw amino-acid sequence, 187 residues long: UPF0301 protein Pcryo_0062 (187 aa).

Belongs to the UPF0301 (AlgH) family.

The sequence is that of UPF0301 protein Pcryo_0062 from Psychrobacter cryohalolentis (strain ATCC BAA-1226 / DSM 17306 / VKM B-2378 / K5).